Here is a 227-residue protein sequence, read N- to C-terminus: Cytochrome c oxidase subunit 2 (227 aa).

Residues 1-14 (MAYPFQLGLQDATS) are Mitochondrial intermembrane-facing. Residues 15-45 (PIMEELLHFHDHTLMIVFLISSLVLYIISLM) form a helical membrane-spanning segment. The Mitochondrial matrix segment spans residues 46 to 59 (LTTKLTHTSTMDAQ). Residues 60-87 (EVETVWTILPAIILILIALPSLRILYMM) form a helical membrane-spanning segment. Over 88-227 (DEINNPSLTV…YFETWSAVMV (140 aa)) the chain is Mitochondrial intermembrane. Residues His161, Cys196, Glu198, Cys200, His204, and Met207 each coordinate Cu cation. Glu198 is a binding site for Mg(2+). Position 218 is a phosphotyrosine (Tyr218).

This sequence belongs to the cytochrome c oxidase subunit 2 family. Component of the cytochrome c oxidase (complex IV, CIV), a multisubunit enzyme composed of 14 subunits. The complex is composed of a catalytic core of 3 subunits MT-CO1, MT-CO2 and MT-CO3, encoded in the mitochondrial DNA, and 11 supernumerary subunits COX4I, COX5A, COX5B, COX6A, COX6B, COX6C, COX7A, COX7B, COX7C, COX8 and NDUFA4, which are encoded in the nuclear genome. The complex exists as a monomer or a dimer and forms supercomplexes (SCs) in the inner mitochondrial membrane with NADH-ubiquinone oxidoreductase (complex I, CI) and ubiquinol-cytochrome c oxidoreductase (cytochrome b-c1 complex, complex III, CIII), resulting in different assemblies (supercomplex SCI(1)III(2)IV(1) and megacomplex MCI(2)III(2)IV(2)). Found in a complex with TMEM177, COA6, COX18, COX20, SCO1 and SCO2. Interacts with TMEM177 in a COX20-dependent manner. Interacts with COX20. Interacts with COX16. Cu cation is required as a cofactor.

It is found in the mitochondrion inner membrane. It carries out the reaction 4 Fe(II)-[cytochrome c] + O2 + 8 H(+)(in) = 4 Fe(III)-[cytochrome c] + 2 H2O + 4 H(+)(out). Its function is as follows. Component of the cytochrome c oxidase, the last enzyme in the mitochondrial electron transport chain which drives oxidative phosphorylation. The respiratory chain contains 3 multisubunit complexes succinate dehydrogenase (complex II, CII), ubiquinol-cytochrome c oxidoreductase (cytochrome b-c1 complex, complex III, CIII) and cytochrome c oxidase (complex IV, CIV), that cooperate to transfer electrons derived from NADH and succinate to molecular oxygen, creating an electrochemical gradient over the inner membrane that drives transmembrane transport and the ATP synthase. Cytochrome c oxidase is the component of the respiratory chain that catalyzes the reduction of oxygen to water. Electrons originating from reduced cytochrome c in the intermembrane space (IMS) are transferred via the dinuclear copper A center (CU(A)) of subunit 2 and heme A of subunit 1 to the active site in subunit 1, a binuclear center (BNC) formed by heme A3 and copper B (CU(B)). The BNC reduces molecular oxygen to 2 water molecules using 4 electrons from cytochrome c in the IMS and 4 protons from the mitochondrial matrix. The polypeptide is Cytochrome c oxidase subunit 2 (MT-CO2) (Lycalopex sechurae (Sechuran desert fox)).